Reading from the N-terminus, the 360-residue chain is Protein Wnt-2 (360 aa).

An N-terminal signal peptide occupies residues 1 to 25; sequence MNSPLRGIWLWLPLLLTWLTPEVSS. 11 disulfide bridges follow: Cys-76–Cys-87, Cys-127–Cys-135, Cys-137–Cys-157, Cys-206–Cys-220, Cys-208–Cys-215, Cys-278–Cys-309, Cys-294–Cys-304, Cys-308–Cys-348, Cys-324–Cys-339, Cys-326–Cys-336, and Cys-331–Cys-332. The O-palmitoleoyl serine; by PORCN moiety is linked to residue Ser-212. The N-linked (GlcNAc...) asparagine glycan is linked to Asn-295.

The protein belongs to the Wnt family. In terms of processing, palmitoleoylation is required for efficient binding to frizzled receptors. Depalmitoleoylation leads to Wnt signaling pathway inhibition.

The protein resides in the secreted. It localises to the extracellular space. Its subcellular location is the extracellular matrix. In terms of biological role, ligand for members of the frizzled family of seven transmembrane receptors. Functions in the canonical Wnt signaling pathway that results in activation of transcription factors of the TCF/LEF family. Functions as a upstream regulator of FGF10 expression. Plays an important role in embryonic lung development. May contribute to embryonic brain development by regulating the proliferation of dopaminergic precursors and neurons. The sequence is that of Protein Wnt-2 (WNT2) from Callithrix jacchus (White-tufted-ear marmoset).